We begin with the raw amino-acid sequence, 287 residues long: Inositol diphosphatase siw14 (287 aa).

The region spanning 85 to 256 (NFGVVYPGII…LNDLKRYISD (172 aa)) is the Tyrosine-protein phosphatase domain. Phosphoserine occurs at positions 156 and 159. Cys-189 serves as the catalytic Phosphocysteine intermediate.

Belongs to the protein-tyrosine phosphatase family. Atypical dual-specificity phosphatase Siw14-like subfamily.

The protein localises to the cytoplasm. It is found in the nucleus. It carries out the reaction 5-diphospho-1D-myo-inositol 1,2,3,4,6-pentakisphosphate + H2O = 1D-myo-inositol hexakisphosphate + phosphate + H(+). The enzyme catalyses 1-diphospho-1D-myo-inositol 2,3,4,5,6-pentakisphosphate + H2O = 1D-myo-inositol hexakisphosphate + phosphate + H(+). The catalysed reaction is 1,5-bis(diphospho)-1D-myo-inositol 2,3,4,6-tetrakisphosphate + H2O = 1-diphospho-1D-myo-inositol 2,3,4,5,6-pentakisphosphate + phosphate + 2 H(+). With respect to regulation, activity is inhibited by the reaction product inorganic phosphate and by sulfate (a phosphate mimetic). Not inhibited by magnesium. Functionally, cleaves the beta-phosphate at the 1- and 5-position of soluble inositol pyrophosphates. Has exopolyphosphatase activity in vitro but does not appear to contribute to the homeostasis of cellular polyphosphate. The protein is Inositol diphosphatase siw14 of Schizosaccharomyces pombe (strain 972 / ATCC 24843) (Fission yeast).